Here is a 144-residue protein sequence, read N- to C-terminus: Large ribosomal subunit protein uL11 (144 aa).

This sequence belongs to the universal ribosomal protein uL11 family. Part of the ribosomal stalk of the 50S ribosomal subunit. Interacts with L10 and the large rRNA to form the base of the stalk. L10 forms an elongated spine to which L12 dimers bind in a sequential fashion forming a multimeric L10(L12)X complex. One or more lysine residues are methylated.

Forms part of the ribosomal stalk which helps the ribosome interact with GTP-bound translation factors. This is Large ribosomal subunit protein uL11 from Deinococcus geothermalis (strain DSM 11300 / CIP 105573 / AG-3a).